The primary structure comprises 446 residues: Protein odr-4 homolog (446 aa).

Residues 76-96 (ASQVGRMLPGGLMVLGVFLMT) traverse the membrane as a helical segment. Over residues 394-415 (HPEKRESEPASQHLESKPENKA) the composition is skewed to basic and acidic residues. The tract at residues 394–417 (HPEKRESEPASQHLESKPENKARS) is disordered. A helical transmembrane segment spans residues 426 to 446 (GLVISTIVASIAIIISFYYIM).

It belongs to the ODR-4 family.

It is found in the membrane. Its function is as follows. May play a role in the trafficking of a subset of G-protein coupled receptors. In Xenopus laevis (African clawed frog), this protein is Protein odr-4 homolog (odr4).